The sequence spans 124 residues: uncharacterized protein (124 aa).

The disordered stretch occupies residues 82–124; it reads SDLGIEGGERAQGQNAHSVHGPGLQTERGGSQLQMVGHPLREL.

This is an uncharacterized protein from Human cytomegalovirus (strain AD169) (HHV-5).